Reading from the N-terminus, the 418-residue chain is Elongation factor Tu, chloroplastic (418 aa).

The region spanning 10–214 is the tr-type G domain; the sequence is KPHVNIGTIG…NVDSYIPTPQ (205 aa). The G1 stretch occupies residues 19–26; that stretch reads GHVDHGKT. 19-26 lines the GTP pocket; it reads GHVDHGKT. Thr26 provides a ligand contact to Mg(2+). Positions 60 to 64 are G2; that stretch reads GITIN. The segment at 81–84 is G3; the sequence is DCPG. GTP contacts are provided by residues 81 to 85 and 136 to 139; these read DCPGH and NKED. Residues 136–139 form a G4 region; sequence NKED. Residues 174 to 176 form a G5 region; sequence SAL.

Belongs to the TRAFAC class translation factor GTPase superfamily. Classic translation factor GTPase family. EF-Tu/EF-1A subfamily.

The protein localises to the plastid. It is found in the chloroplast. It carries out the reaction GTP + H2O = GDP + phosphate + H(+). GTP hydrolase that promotes the GTP-dependent binding of aminoacyl-tRNA to the A-site of ribosomes during protein biosynthesis. The chain is Elongation factor Tu, chloroplastic (tufA) from Chlamydomonas reinhardtii (Chlamydomonas smithii).